Reading from the N-terminus, the 198-residue chain is Probable GTP-binding protein EngB (198 aa).

Residues 36 to 198 form the EngB-type G domain; the sequence is SDPQFAFIGR…NLSKLQELLE (163 aa). Residues 44-51, 70-74, 88-91, 155-158, and 182-184 contribute to the GTP site; these read GRSNVGKS, GRTQL, DLPG, NKID, and ISA. Mg(2+) contacts are provided by S51 and T72.

Belongs to the TRAFAC class TrmE-Era-EngA-EngB-Septin-like GTPase superfamily. EngB GTPase family. Mg(2+) is required as a cofactor.

Functionally, necessary for normal cell division and for the maintenance of normal septation. In Mesomycoplasma hyopneumoniae (strain J / ATCC 25934 / NCTC 10110) (Mycoplasma hyopneumoniae), this protein is Probable GTP-binding protein EngB.